A 629-amino-acid polypeptide reads, in one-letter code: tRNA uridine 5-carboxymethylaminomethyl modification enzyme MnmG (629 aa).

Position 13-18 (13-18 (GGGHAG)) interacts with FAD. Residue 273–287 (GPRYCPSIEDKIHRF) coordinates NAD(+).

The protein belongs to the MnmG family. As to quaternary structure, homodimer. Heterotetramer of two MnmE and two MnmG subunits. The cofactor is FAD.

The protein localises to the cytoplasm. Functionally, NAD-binding protein involved in the addition of a carboxymethylaminomethyl (cmnm) group at the wobble position (U34) of certain tRNAs, forming tRNA-cmnm(5)s(2)U34. The chain is tRNA uridine 5-carboxymethylaminomethyl modification enzyme MnmG from Shewanella baltica (strain OS223).